Reading from the N-terminus, the 370-residue chain is Proline-rich protein 5-like (370 aa).

At serine 28 the chain carries Phosphoserine. Disordered regions lie at residues 312 to 346 (LGEE…LDSP) and 351 to 370 (LEDV…ASLS).

The protein belongs to the PROTOR family. In terms of assembly, interacts with the mammalian target of rapamycin complex 2 (mTORC2) which contains MTOR, MLST8, PRR5, RICTOR, MAPKAP1 and DEPTOR. Interacts with RFFL. Interacts (via C-terminus) with ZFP36 (via C-terminus); this interaction may accelerate ZFP36-mediated mRNA decay during stress. Interacts with RICTOR. In terms of processing, ubiquitinated. Ubiquitination by RFFL promotes proteasomal degradation of PRR5L thereby modifying the substrate-specific activity of the mTORC2 complex. Ubiquitination by RFFL is stimulated by LPA/lysophosphatidic acid.

Associates with the mTORC2 complex that regulates cellular processes including survival and organization of the cytoskeleton. Regulates the activity of the mTORC2 complex in a substrate-specific manner preventing for instance the specific phosphorylation of PKCs and thereby controlling cell migration. Plays a role in the stimulation of ZFP36-mediated mRNA decay of several ZFP36-associated mRNAs, such as TNF-alpha and GM-CSF, in response to stress. Required for ZFP36 localization to cytoplasmic stress granule (SG) and P-body (PB) in response to stress. This is Proline-rich protein 5-like (Prr5l) from Mus musculus (Mouse).